Reading from the N-terminus, the 577-residue chain is Lysine-specific demethylase 7B (577 aa).

Residues 5–56 (QLYCVCRQPYDVSRFMIECDICKDWFHGSCVEVEEHYAVDIDVYHCPNCDVH) form a PHD-type zinc finger. Positions 198–354 (FSDTKMAELV…MQLRCYEMER (157 aa)) constitute a JmjC domain. T247 contributes to the substrate binding site. The Fe cation site is built by H250 and D252. A substrate-binding site is contributed by K267. Fe cation is bound at residue H322. The tract at residues 460–513 (CPSTRSAHERGSHARKTARRLRGHHHHHHRHHHHHHHHHHHNHQHSDGPKAPSH) is disordered. Positions 472–502 (HARKTARRLRGHHHHHHRHHHHHHHHHHHNH) are enriched in basic residues.

Belongs to the JHDM1 histone demethylase family. JHDM1D subfamily. Fe(2+) is required as a cofactor. As to expression, predominantly expressed in brain.

The protein resides in the nucleus. In terms of biological role, histone demethylase required for brain development. Specifically demethylates dimethylated 'Lys-9' and 'Lys-27' (H3K9me2 and H3K27me2, respectively) of histone H3 and monomethylated histone H4 'Lys-20' residue (H4K20Me1), thereby playing a central role in histone code. This Danio rerio (Zebrafish) protein is Lysine-specific demethylase 7B (jhdm1db).